Here is a 176-residue protein sequence, read N- to C-terminus: Nucleoside triphosphate/diphosphate phosphatase (176 aa).

Catalysis depends on arginine 23, which acts as the Proton donor. Mg(2+) contacts are provided by asparagine 87, aspartate 103, aspartate 105, aspartate 107, aspartate 120, and glutamate 123.

This sequence belongs to the Ntdp family. It depends on Mg(2+) as a cofactor.

The catalysed reaction is a ribonucleoside 5'-triphosphate + H2O = a ribonucleoside 5'-diphosphate + phosphate + H(+). It carries out the reaction a ribonucleoside 5'-diphosphate + H2O = a ribonucleoside 5'-phosphate + phosphate + H(+). In terms of biological role, has nucleoside phosphatase activity towards nucleoside triphosphates and nucleoside diphosphates. This Bacillus cytotoxicus (strain DSM 22905 / CIP 110041 / 391-98 / NVH 391-98) protein is Nucleoside triphosphate/diphosphate phosphatase.